The following is a 505-amino-acid chain: L-carnitine/gamma-butyrobetaine antiporter (505 aa).

The next 12 helical transmembrane spans lie at 10 to 30, 50 to 70, 92 to 112, 143 to 163, 195 to 215, 231 to 251, 263 to 283, 316 to 336, 347 to 367, 403 to 423, 446 to 466, and 475 to 495; these read IEPK…WLTV, IWGW…FWLV, IFMM…SIEI, GPLP…FFFV, FYLV…TPLV, LDAI…ACGL, SYLS…SFIM, WTVF…IFLA, LCFG…TVLG, LSTA…VTLI, LLVR…LLAL, and AIIA…LSFI.

Belongs to the BCCT transporter (TC 2.A.15) family. CaiT subfamily. As to quaternary structure, homotrimer.

The protein localises to the cell inner membrane. It catalyses the reaction 4-(trimethylamino)butanoate(in) + (R)-carnitine(out) = 4-(trimethylamino)butanoate(out) + (R)-carnitine(in). Its pathway is amine and polyamine metabolism; carnitine metabolism. In terms of biological role, catalyzes the exchange of L-carnitine for gamma-butyrobetaine. The sequence is that of L-carnitine/gamma-butyrobetaine antiporter from Salmonella arizonae (strain ATCC BAA-731 / CDC346-86 / RSK2980).